Reading from the N-terminus, the 648-residue chain is Threonine--tRNA ligase (648 aa).

Positions 1–61 (MIKITLPDGS…TTDGNLILYT (61 aa)) constitute a TGS domain. A catalytic region spans residues 240 to 539 (DHRKLGKELE…LLEHTAGNFP (300 aa)). Positions 335, 386, and 516 each coordinate Zn(2+).

Belongs to the class-II aminoacyl-tRNA synthetase family. Homodimer. Requires Zn(2+) as cofactor.

The protein localises to the cytoplasm. The catalysed reaction is tRNA(Thr) + L-threonine + ATP = L-threonyl-tRNA(Thr) + AMP + diphosphate + H(+). Functionally, catalyzes the attachment of threonine to tRNA(Thr) in a two-step reaction: L-threonine is first activated by ATP to form Thr-AMP and then transferred to the acceptor end of tRNA(Thr). Also edits incorrectly charged L-seryl-tRNA(Thr). The chain is Threonine--tRNA ligase from Flavobacterium johnsoniae (strain ATCC 17061 / DSM 2064 / JCM 8514 / BCRC 14874 / CCUG 350202 / NBRC 14942 / NCIMB 11054 / UW101) (Cytophaga johnsonae).